The following is a 216-amino-acid chain: U1 small nuclear ribonucleoprotein C (216 aa).

The Matrin-type zinc-finger motif lies at Phe4–Glu36. 3 stretches are compositionally biased toward pro residues: residues Ala68–Gly80, Gln87–Pro198, and Pro206–Arg216. A disordered region spans residues Ala68 to Arg216.

This sequence belongs to the U1 small nuclear ribonucleoprotein C family. U1 snRNP is composed of the 7 core Sm proteins B/B', D1, D2, D3, E, F and G that assemble in a heptameric protein ring on the Sm site of the small nuclear RNA to form the core snRNP, and at least 3 U1 snRNP-specific proteins U1-70K, U1-A and U1-C. U1-C interacts with U1 snRNA and the 5' splice-site region of the pre-mRNA.

It is found in the nucleus. Component of the spliceosomal U1 snRNP, which is essential for recognition of the pre-mRNA 5' splice-site and the subsequent assembly of the spliceosome. U1-C is directly involved in initial 5' splice-site recognition for both constitutive and regulated alternative splicing. The interaction with the 5' splice-site seems to precede base-pairing between the pre-mRNA and the U1 snRNA. Stimulates commitment or early (E) complex formation by stabilizing the base pairing of the 5' end of the U1 snRNA and the 5' splice-site region. The chain is U1 small nuclear ribonucleoprotein C from Aspergillus fumigatus (strain ATCC MYA-4609 / CBS 101355 / FGSC A1100 / Af293) (Neosartorya fumigata).